Consider the following 161-residue polypeptide: Nucleotide-binding protein SO_3815 (161 aa).

This sequence belongs to the YajQ family.

Its function is as follows. Nucleotide-binding protein. The polypeptide is Nucleotide-binding protein SO_3815 (Shewanella oneidensis (strain ATCC 700550 / JCM 31522 / CIP 106686 / LMG 19005 / NCIMB 14063 / MR-1)).